The sequence spans 480 residues: GTPase Der (480 aa).

2 consecutive EngA-type G domains span residues Pro5–Glu170 and Leu178–Met351. GTP contacts are provided by residues Gly11–Ser18, Asp58–Ile62, Asn123–Asp126, Gly184–Ser191, Asp231–Val235, and Asn296–Asp299. One can recognise a KH-like domain in the interval Phe352 to Glu436. Positions Pro438–Leu454 are enriched in polar residues. A disordered region spans residues Pro438 to Arg480. The span at Arg455 to Arg480 shows a compositional bias: basic and acidic residues.

Belongs to the TRAFAC class TrmE-Era-EngA-EngB-Septin-like GTPase superfamily. EngA (Der) GTPase family. As to quaternary structure, associates with the 50S ribosomal subunit.

GTPase that plays an essential role in the late steps of ribosome biogenesis. This chain is GTPase Der, found in Psychrobacter cryohalolentis (strain ATCC BAA-1226 / DSM 17306 / VKM B-2378 / K5).